A 159-amino-acid polypeptide reads, in one-letter code: Cytochrome c-type biogenesis protein CcmE (159 aa).

The Cytoplasmic segment spans residues 1 to 8 (MNPRRKTR). The chain crosses the membrane as a helical; Signal-anchor for type II membrane protein span at residues 9–29 (LWVALTVLAGLGLTMALVLYA). Residues 30 to 159 (LRANIDLFYT…PPQAYKDNRP (130 aa)) lie on the Periplasmic side of the membrane. Histidine 130 and tyrosine 134 together coordinate heme. Residues 130–159 (HDENYTPPEVKAAMDANHTRPPQAYKDNRP) are disordered.

This sequence belongs to the CcmE/CycJ family.

The protein localises to the cell inner membrane. Functionally, heme chaperone required for the biogenesis of c-type cytochromes. Transiently binds heme delivered by CcmC and transfers the heme to apo-cytochromes in a process facilitated by CcmF and CcmH. This chain is Cytochrome c-type biogenesis protein CcmE, found in Cronobacter sakazakii (strain ATCC BAA-894) (Enterobacter sakazakii).